We begin with the raw amino-acid sequence, 350 residues long: Ion-translocating oxidoreductase complex subunit D (350 aa).

4 consecutive transmembrane segments (helical) span residues 20 to 40, 42 to 62, 89 to 109, and 123 to 143; these read IMLL…WFFG, GTVL…AAIL, IPPL…VVIA, and PAMI…TSWL. T187 carries the post-translational modification FMN phosphoryl threonine. A run of 5 helical transmembrane segments spans residues 214–234, 242–262, 267–287, 301–321, and 322–342; these read VLAG…GLFL, WHIP…GWLF, LASP…FFIL, LIFG…GGYP, and DGVA…DYYT.

The protein belongs to the NqrB/RnfD family. As to quaternary structure, the complex is composed of six subunits: RnfA, RnfB, RnfC, RnfD, RnfE and RnfG. It depends on FMN as a cofactor.

It is found in the cell inner membrane. Functionally, part of a membrane-bound complex that couples electron transfer with translocation of ions across the membrane. In Klebsiella pneumoniae (strain 342), this protein is Ion-translocating oxidoreductase complex subunit D.